Here is a 154-residue protein sequence, read N- to C-terminus: Cyanate hydratase (154 aa).

Active-site residues include Arg100, Glu103, and Ser126.

Belongs to the cyanase family.

It carries out the reaction cyanate + hydrogencarbonate + 3 H(+) = NH4(+) + 2 CO2. In terms of biological role, catalyzes the reaction of cyanate with bicarbonate to produce ammonia and carbon dioxide. This is Cyanate hydratase from Aspergillus fumigatus (strain ATCC MYA-4609 / CBS 101355 / FGSC A1100 / Af293) (Neosartorya fumigata).